The primary structure comprises 3564 residues: Sushi, von Willebrand factor type A, EGF and pentraxin domain-containing protein 1 (3564 aa).

The signal sequence occupies residues 1–17 (MWTRLAFCCWALALVSG). The 182-residue stretch at 84–265 (ELVFLVDESS…LARRALHEDL (182 aa)) folds into the VWFA domain. Residue asparagine 187 is glycosylated (N-linked (GlcNAc...) asparagine). Sushi domains follow at residues 377 to 436 (VHCP…FCRV), 437 to 496 (RTCP…RCVE), and 497 to 561 (RHCA…VCKD). 6 disulfide bridges follow: cysteine 379/cysteine 421, cysteine 407/cysteine 434, cysteine 439/cysteine 481, cysteine 467/cysteine 494, cysteine 499/cysteine 544, and cysteine 530/cysteine 559. HYR domains lie at 560–644 (KDVE…KVID) and 645–724 (VEPP…VIKG). Positions 725–789 (SPCEVPFTPV…YSTEWPDCAI (65 aa)) constitute a Sushi 4 domain. Intrachain disulfides connect cysteine 727/cysteine 769, cysteine 753/cysteine 787, cysteine 1192/cysteine 1203, cysteine 1197/cysteine 1212, cysteine 1214/cysteine 1223, cysteine 1230/cysteine 1241, cysteine 1235/cysteine 1250, cysteine 1252/cysteine 1261, cysteine 1268/cysteine 1279, cysteine 1273/cysteine 1288, cysteine 1290/cysteine 1299, cysteine 1306/cysteine 1317, cysteine 1311/cysteine 1326, cysteine 1328/cysteine 1337, cysteine 1344/cysteine 1355, cysteine 1349/cysteine 1364, cysteine 1366/cysteine 1375, cysteine 1382/cysteine 1393, cysteine 1387/cysteine 1402, and cysteine 1404/cysteine 1413. Positions 1188-1224 (VFHECFLNPCHNSGTCQQLGRGYVCLCPPGYTGLKCE) constitute an EGF-like 1 domain. One can recognise an EGF-like 2; calcium-binding domain in the interval 1226–1262 (DIDECSSLPCLNGGICRDKVGGFTCECSSGYTGQICE). In terms of domain architecture, EGF-like 3; calcium-binding spans 1264–1300 (NINECSSSPCLNKGTCTDGLASYRCTCVSGYVGVHCE). The region spanning 1302–1338 (DVNECQSSPCLNNAVCKDQVGGFSCKCPPGFLGTRCE) is the EGF-like 4; calcium-binding domain. In terms of domain architecture, EGF-like 5; calcium-binding spans 1340 to 1376 (NVDECLSQPCQNGATCKDGANSFRCQCPAGFTGPHCE). Positions 1378-1414 (NINECQSNPCRNQATCVDELNSYSCKCRPGFSGRRCE) constitute an EGF-like 6; calcium-binding domain. Positions 1419-1623 (SGFNLDFEVS…VKVDSSSIFC (205 aa)) constitute a Pentraxin (PTX) domain. Sushi domains are found at residues 1624–1682 (SDCP…HCER) and 1683–1740 (IRCG…SCLD). 35 cysteine pairs are disulfide-bonded: cysteine 1626/cysteine 1667, cysteine 1653/cysteine 1680, cysteine 1685/cysteine 1725, cysteine 1711/cysteine 1738, cysteine 1744/cysteine 1756, cysteine 1750/cysteine 1765, cysteine 1767/cysteine 1778, cysteine 1784/cysteine 1824, cysteine 1810/cysteine 1837, cysteine 1842/cysteine 1882, cysteine 1868/cysteine 1895, cysteine 1900/cysteine 1940, cysteine 1926/cysteine 1953, cysteine 1958/cysteine 1998, cysteine 1984/cysteine 2011, cysteine 2016/cysteine 2056, cysteine 2042/cysteine 2073, cysteine 2078/cysteine 2121, cysteine 2107/cysteine 2136, cysteine 2141/cysteine 2181, cysteine 2167/cysteine 2194, cysteine 2199/cysteine 2240, cysteine 2226/cysteine 2254, cysteine 2259/cysteine 2299, cysteine 2285/cysteine 2313, cysteine 2318/cysteine 2358, cysteine 2344/cysteine 2371, cysteine 2376/cysteine 2417, cysteine 2403/cysteine 2430, cysteine 2435/cysteine 2475, cysteine 2461/cysteine 2488, cysteine 2493/cysteine 2533, cysteine 2519/cysteine 2546, cysteine 2551/cysteine 2591, and cysteine 2577/cysteine 2603. In terms of domain architecture, EGF-like 7; calcium-binding spans 1740 to 1779 (DVDECAVGSDCSEHASCLNTNGSYICSCKPPYTGDGKNCA). The N-linked (GlcNAc...) asparagine glycan is linked to asparagine 1760. 14 consecutive Sushi domains span residues 1776–1839 (KNCA…SCEA), 1840–1897 (ISCG…VCEL), 1898–1955 (VKCS…SCQL), 1956–2013 (VSCG…QCLA), 2014–2075 (VSCD…RCIA), 2076–2138 (HFCE…QCIP), 2139–2196 (VRCG…TCHP), 2197–2256 (VSCN…SCTP), 2257–2315 (LNCG…KCVP), 2316–2373 (TKCA…VCKL), 2374–2432 (VLCQ…ECVP), 2433–2490 (VECP…MCRP), 2491–2548 (IECP…SCNA), and 2549–2605 (IHCS…TCVP). The interval 2634-2641 (DMMEVPYL) is important for the interaction with integrin ITGA9:ITGB1. 14 Sushi domains span residues 2659–2708 (EESL…SCIS), 2709–2766 (IECD…RCEV), 2767–2824 (ISCS…VCLP), 2825–2882 (VDCG…SCVP), 2883–2940 (VRCP…ICKP), 2941–2998 (ATCG…SCLP), 2999–3054 (CTCS…LCEH), 3055–3112 (ADCG…TCEP), 3113–3171 (VSCG…NCSP), 3172–3231 (KTCP…SCIP), 3232–3289 (VVCG…VCRE), 3290–3347 (SRCE…LCKP), 3348–3406 (NPCP…RCEK), and 3407–3463 (ISCG…ICRA). 33 cysteine pairs are disulfide-bonded: cysteine 2679-cysteine 2706, cysteine 2711-cysteine 2751, cysteine 2737-cysteine 2764, cysteine 2769-cysteine 2809, cysteine 2795-cysteine 2822, cysteine 2827-cysteine 2867, cysteine 2853-cysteine 2880, cysteine 2885-cysteine 2925, cysteine 2911-cysteine 2938, cysteine 2943-cysteine 2983, cysteine 2969-cysteine 2996, cysteine 3001-cysteine 3040, cysteine 3026-cysteine 3052, cysteine 3057-cysteine 3097, cysteine 3083-cysteine 3110, cysteine 3115-cysteine 3156, cysteine 3141-cysteine 3169, cysteine 3174-cysteine 3214, cysteine 3200-cysteine 3229, cysteine 3234-cysteine 3274, cysteine 3260-cysteine 3287, cysteine 3292-cysteine 3332, cysteine 3318-cysteine 3345, cysteine 3350-cysteine 3391, cysteine 3377-cysteine 3404, cysteine 3409-cysteine 3449, cysteine 3435-cysteine 3461, cysteine 3497-cysteine 3507, cysteine 3501-cysteine 3513, cysteine 3515-cysteine 3524, cysteine 3529-cysteine 3539, cysteine 3533-cysteine 3545, and cysteine 3547-cysteine 3556. EGF-like domains lie at 3493–3525 (EEPICILPCLNGGRCVAPYRCDCPAGWTGSRCH) and 3526–3557 (TATCQSPCLNGGKCVRPNRCHCLSSWTGHDCS).

In terms of assembly, interacts (via Sushi domain 21) with ITGA9:ITGB1; thereby inhibits Ca(2+) intracellular signaling and as a result represses vasocontraction. Interacts (via Sushi domain 21) with ITGA4:ITGB1; thereby inhibits Ca(2+) intracellular signaling and as a result represses vasocontraction. Interacts with ANGPT1 and ANGPT2. Interacts with PEAR1 (via extracellular domain). Interacts with HSPG2, TLN1, FN1, COPA, CCT2, IQGAP1, LAMC1 and NID1. Interacts (via C-terminus) with TIE1.

Its subcellular location is the secreted. It localises to the nucleus. The protein resides in the cytoplasm. It is found in the membrane. Required for morphological development, cell alignment and migration of lymphatic endothelial cells during embryonic development, potentially via modulation of ANGPT2-TIE1 signaling and subsequent activation of FOXC2 transcription. Required for embryonic lymphatic vascular development, via mediating the correct formation of the first lymphovenous contact site and tight association of the lymphatic endothelium with the venous endothelium. Represses PRKCA-mediated L-type voltage-gated channel Ca(2+) influx and ROCK-mediated calcium sensitivity in vascular smooth muscle cells, via its interaction with integrins, thereby inhibiting vasocontraction. Promotes platelet activation, via its interaction with PEAR1 and subsequent activation of AKT/mTOR signaling. Plays a role in epidermal development and keratinocyte differentiation, independent of cell-cell adhesion. May play a role in initial cell attachment of stromal osteogenic cells. May promote myoblast cell adhesion when in the presence of integrin ITGA9:ITGB1. This chain is Sushi, von Willebrand factor type A, EGF and pentraxin domain-containing protein 1 (Svep1), found in Rattus norvegicus (Rat).